Reading from the N-terminus, the 177-residue chain is ATP synthase subunit delta (177 aa).

This sequence belongs to the ATPase delta chain family. As to quaternary structure, F-type ATPases have 2 components, F(1) - the catalytic core - and F(0) - the membrane proton channel. F(1) has five subunits: alpha(3), beta(3), gamma(1), delta(1), epsilon(1). F(0) has three main subunits: a(1), b(2) and c(10-14). The alpha and beta chains form an alternating ring which encloses part of the gamma chain. F(1) is attached to F(0) by a central stalk formed by the gamma and epsilon chains, while a peripheral stalk is formed by the delta and b chains.

It localises to the cell inner membrane. In terms of biological role, f(1)F(0) ATP synthase produces ATP from ADP in the presence of a proton or sodium gradient. F-type ATPases consist of two structural domains, F(1) containing the extramembraneous catalytic core and F(0) containing the membrane proton channel, linked together by a central stalk and a peripheral stalk. During catalysis, ATP synthesis in the catalytic domain of F(1) is coupled via a rotary mechanism of the central stalk subunits to proton translocation. Functionally, this protein is part of the stalk that links CF(0) to CF(1). It either transmits conformational changes from CF(0) to CF(1) or is implicated in proton conduction. This is ATP synthase subunit delta from Neisseria gonorrhoeae (strain ATCC 700825 / FA 1090).